The chain runs to 123 residues: Large ribosomal subunit protein uL14 (123 aa).

It belongs to the universal ribosomal protein uL14 family. In terms of assembly, part of the 50S ribosomal subunit. Forms a cluster with proteins L3 and L19. In the 70S ribosome, L14 and L19 interact and together make contacts with the 16S rRNA in bridges B5 and B8.

Functionally, binds to 23S rRNA. Forms part of two intersubunit bridges in the 70S ribosome. The protein is Large ribosomal subunit protein uL14 of Tropheryma whipplei (strain TW08/27) (Whipple's bacillus).